Reading from the N-terminus, the 89-residue chain is Small ribosomal subunit protein uS15 (89 aa).

This sequence belongs to the universal ribosomal protein uS15 family. Part of the 30S ribosomal subunit. Forms a bridge to the 50S subunit in the 70S ribosome, contacting the 23S rRNA.

In terms of biological role, one of the primary rRNA binding proteins, it binds directly to 16S rRNA where it helps nucleate assembly of the platform of the 30S subunit by binding and bridging several RNA helices of the 16S rRNA. Forms an intersubunit bridge (bridge B4) with the 23S rRNA of the 50S subunit in the ribosome. The chain is Small ribosomal subunit protein uS15 from Methylococcus capsulatus (strain ATCC 33009 / NCIMB 11132 / Bath).